We begin with the raw amino-acid sequence, 422 residues long: Glucosylglycerol-phosphate phosphatase (422 aa).

D403 functions as the Proton donor in the catalytic mechanism.

Belongs to the histidine acid phosphatase family. As to quaternary structure, monomer. Interacts with GGPS.

It catalyses the reaction 2-O-(alpha-D-glucopyranosyl)-sn-glycerol 3-phosphate + H2O = 2-O-(alpha-D-glucopyranosyl)glycerol + phosphate. Phosphorylates glucosylglycerol-phosphate the precursor of the osmoprotectant glucosylglycerol necessary for salt adaptation of Synechocystis. The protein is Glucosylglycerol-phosphate phosphatase (stpA) of Synechocystis sp. (strain ATCC 27184 / PCC 6803 / Kazusa).